Here is a 131-residue protein sequence, read N- to C-terminus: Large-conductance mechanosensitive channel (131 aa).

Transmembrane regions (helical) follow at residues 8–28 (FAMR…GAFG), 30–50 (IVSS…LGGV), and 67–87 (GMFI…FVFV).

The protein belongs to the MscL family. As to quaternary structure, homopentamer.

The protein resides in the cell membrane. Functionally, channel that opens in response to stretch forces in the membrane lipid bilayer. May participate in the regulation of osmotic pressure changes within the cell. The polypeptide is Large-conductance mechanosensitive channel (Geobacillus sp. (strain WCH70)).